The following is a 949-amino-acid chain: MSEYKDTLNLPETGFPMRGDLAKREPEMLQRWYQEDLYGAIRQAKKGKKSFVLHDGPPYANGDIHIGHALNKILKDVIIKSKTLSGFDAPYIPGWDCHGLPIELMVEKKVGKPGQKVTAAEFREKCREYAAGQVEGQKESFKRLGILGEWDKPYRTMDFVTEANIIRALGKIADNGHLLKGFKPVHWCTDCGSALAEAEVEYKNKVSPSIDVRFKAADEAAVLAKFGLAAGHEGKGDVSIVIWTTTPWTLPANRAVCLRADLEYVLIQVEGEQPERIIVASELAKSVMDRAGIEHFHNLGFATGADLELVQFQHPFYSFTVPAILGDHVTTDSGTGVVHTAPGHGQEDFAVGQQYGLEVANPVGSNGVYLPDTELFAGQHVFKANDSVLEVLKEKGALLHHHAYEHSYPHCWRHKTPIIFRATPQWFVSMEQAGLREQALTAIKGVHWMPDWGQSRIEGMVAGRPEWCISRQRTWGVPIALFVHKETAELHPNSADLIEKVAQLVEQKGIQAWWDLDTAELLGAEDAANYEKVLDTLDVWFDSGVTHSAVVDARQEFNGAEADMYLEGSDQHRGWFQSSLISSVAMKSKAPYKEVLTHGFVVDGQGRKMSKSIGNVVAPQDVTNKLGADILRLWVASTDYTGEVAVSDEILKRSADAYRRIRNTARFFLANLNGFNPTTDIIPVEDMVALDRWAVGRALAAQQEIIQAYQDYNLHAVVQRLMNFCSIEMGSFYLDVIKDRQYTAKRGGHAQRSCQTALFFIVEALVRWMAPIMSFTADEIWNAMPAQQADGSARDKFVFTTEWFDGLFGLAEGEELNNAFWNDIQKVRGSVNKLLENARNEKLIGGSLQAELVLFADDALASKLAKLGDELRFVLLTSKAVVKPLAEKSEAAQATDIDGLFVQVNKTEAEKCDRCWHHTPDVGTIAGHTTICGRCVSNVEGEGEVRKFA.

The short motif at Pro58–His68 is the 'HIGH' region element. Residue Glu567 participates in L-isoleucyl-5'-AMP binding. A 'KMSKS' region motif is present at residues Lys608 to Ser612. Residue Lys611 coordinates ATP. Residues Cys912, Cys915, Cys932, and Cys935 each coordinate Zn(2+).

It belongs to the class-I aminoacyl-tRNA synthetase family. IleS type 1 subfamily. In terms of assembly, monomer. Requires Zn(2+) as cofactor.

It localises to the cytoplasm. It carries out the reaction tRNA(Ile) + L-isoleucine + ATP = L-isoleucyl-tRNA(Ile) + AMP + diphosphate. In terms of biological role, catalyzes the attachment of isoleucine to tRNA(Ile). As IleRS can inadvertently accommodate and process structurally similar amino acids such as valine, to avoid such errors it has two additional distinct tRNA(Ile)-dependent editing activities. One activity is designated as 'pretransfer' editing and involves the hydrolysis of activated Val-AMP. The other activity is designated 'posttransfer' editing and involves deacylation of mischarged Val-tRNA(Ile). This is Isoleucine--tRNA ligase from Vibrio cholerae serotype O1 (strain ATCC 39541 / Classical Ogawa 395 / O395).